Consider the following 358-residue polypeptide: Peptide chain release factor 1 (358 aa).

N5-methylglutamine is present on Gln233.

It belongs to the prokaryotic/mitochondrial release factor family. In terms of processing, methylated by PrmC. Methylation increases the termination efficiency of RF1.

The protein resides in the cytoplasm. Peptide chain release factor 1 directs the termination of translation in response to the peptide chain termination codons UAG and UAA. The protein is Peptide chain release factor 1 of Listeria monocytogenes serovar 1/2a (strain ATCC BAA-679 / EGD-e).